A 78-amino-acid polypeptide reads, in one-letter code: Large ribosomal subunit protein bL28 (78 aa).

This sequence belongs to the bacterial ribosomal protein bL28 family.

The sequence is that of Large ribosomal subunit protein bL28 from Leifsonia xyli subsp. xyli (strain CTCB07).